Consider the following 780-residue polypeptide: Tyrosine-protein phosphatase non-receptor type 12 (780 aa).

At Met1 the chain carries N-acetylmethionine. Ser19 carries the post-translational modification Phosphoserine. The Tyrosine-protein phosphatase domain occupies 28-293; that stretch reads FARDFMRLRR…ELVHRAIAQL (266 aa). Residues Arg36, 63-67, Asp199, 231-237, and Gln278 each bind substrate; these read RYKDI and CSAGCGR. Residue Cys231 is the Phosphocysteine intermediate of the active site. Ser332, Ser435, Ser449, and Ser468 each carry phosphoserine. Positions 345 to 438 are interaction with TGFB1I1; the sequence is VEGDAKEEIL…KLERNLSFEI (94 aa). The segment covering 502–519 has biased composition (polar residues); the sequence is QSNKVSVTPPEESQNSDT. Disordered regions lie at residues 502–639, 657–725, and 744–780; these read QSNK…STES, GTTH…EKCD, and SDKR…SEWT. Phosphothreonine occurs at positions 509 and 519. Positions 521–533 are enriched in basic and acidic residues; the sequence is PRPDRLPLDEKGH. 2 stretches are compositionally biased toward polar residues: residues 552–577 and 587–601; these read EGNS…TQVE and TSPL…TNPL. Residue Ser567 is modified to Phosphoserine. The residue at position 569 (Thr569) is a Phosphothreonine. Residues Ser571 and Ser596 each carry the phosphoserine modification. Thr598 carries the post-translational modification Phosphothreonine. Basic and acidic residues predominate over residues 602–613; sequence HSDDSDSDERNS. 4 positions are modified to phosphoserine: Ser603, Ser606, Ser608, and Ser613. Residues 622-639 are compositionally biased toward low complexity; sequence TNISTASATVSAATSTES. Phosphoserine occurs at positions 673 and 689. Over residues 690–703 the composition is skewed to polar residues; that stretch reads EHNTPVRSEWSELQ. Position 693 is a phosphothreonine (Thr693). Basic and acidic residues-rich tracts occupy residues 704–725 and 771–780; these read SQER…EKCD and GPRDPPSEWT.

Belongs to the protein-tyrosine phosphatase family. Non-receptor class 4 subfamily. As to quaternary structure, interacts with TGFB1I1. Interacts with PSTPIP1. Interacts with PTK2B/PYK2. Interacts with LPXN. Interacts with SORBS2; this interaction greatly enhances WASF1 dephosphorylation and might mediate partial translocation to focal adhesion sites. Post-translationally, phosphorylated by STK24/MST3 and this results in inhibition of its activity.

Its subcellular location is the cytoplasm. It localises to the cell junction. The protein resides in the focal adhesion. It is found in the cell projection. The protein localises to the podosome. It catalyses the reaction O-phospho-L-tyrosyl-[protein] + H2O = L-tyrosyl-[protein] + phosphate. Dephosphorylates a range of proteins, and thereby regulates cellular signaling cascades. Dephosphorylates cellular tyrosine kinases, such as ERBB2 and PTK2B/PYK2, and thereby regulates signaling via ERBB2 and PTK2B/PYK2. Selectively dephosphorylates ERBB2 phosphorylated at 'Tyr-1112', 'Tyr-1196', and/or 'Tyr-1248'. In Homo sapiens (Human), this protein is Tyrosine-protein phosphatase non-receptor type 12 (PTPN12).